Here is a 572-residue protein sequence, read N- to C-terminus: NADP-dependent malic enzyme (572 aa).

Met1 carries the post-translational modification N-acetylmethionine. The Proton donor role is filled by Tyr102. Arg155 contacts NADP(+). The active-site Proton acceptor is the Lys173. A divalent metal cation contacts are provided by Glu245, Asp246, and Asp269. Residues Asp269 and 301–318 contribute to the NADP(+) site; that span reads GAGEAALGIAHLIVMALE. Position 336 is a phosphoserine (Ser336). Position 408 (Asn408) interacts with NADP(+).

This sequence belongs to the malic enzymes family. As to quaternary structure, homotetramer. Requires Mg(2+) as cofactor. Mn(2+) is required as a cofactor. Expressed in all tissues tested including liver, placenta and white adipose tissue.

It localises to the cytoplasm. It carries out the reaction (S)-malate + NADP(+) = pyruvate + CO2 + NADPH. The enzyme catalyses oxaloacetate + H(+) = pyruvate + CO2. Catalyzes the oxidative decarboxylation of (S)-malate in the presence of NADP(+) and divalent metal ions, and decarboxylation of oxaloacetate. This Homo sapiens (Human) protein is NADP-dependent malic enzyme.